The primary structure comprises 153 residues: 6,7-dimethyl-8-ribityllumazine synthase (153 aa).

5-amino-6-(D-ribitylamino)uracil is bound by residues phenylalanine 21, 55 to 57 (AFE), and 79 to 81 (TVI). (2S)-2-hydroxy-3-oxobutyl phosphate is bound at residue 84-85 (AT). The active-site Proton donor is histidine 87. Phenylalanine 112 provides a ligand contact to 5-amino-6-(D-ribitylamino)uracil. Arginine 126 contributes to the (2S)-2-hydroxy-3-oxobutyl phosphate binding site.

It belongs to the DMRL synthase family. In terms of assembly, forms an icosahedral capsid composed of 60 subunits, arranged as a dodecamer of pentamers.

It catalyses the reaction (2S)-2-hydroxy-3-oxobutyl phosphate + 5-amino-6-(D-ribitylamino)uracil = 6,7-dimethyl-8-(1-D-ribityl)lumazine + phosphate + 2 H2O + H(+). The protein operates within cofactor biosynthesis; riboflavin biosynthesis; riboflavin from 2-hydroxy-3-oxobutyl phosphate and 5-amino-6-(D-ribitylamino)uracil: step 1/2. Catalyzes the formation of 6,7-dimethyl-8-ribityllumazine by condensation of 5-amino-6-(D-ribitylamino)uracil with 3,4-dihydroxy-2-butanone 4-phosphate. This is the penultimate step in the biosynthesis of riboflavin. The polypeptide is 6,7-dimethyl-8-ribityllumazine synthase (Bacillus anthracis (strain A0248)).